A 310-amino-acid chain; its full sequence is Protoheme IX farnesyltransferase 2 (310 aa).

9 consecutive transmembrane segments (helical) span residues 25–45 (PGIIFGNLISVAGGFLLAAKG), 49–69 (LVLMLASLVGLSLVVASGCAI), 87–107 (RVTVTGEIAVGNVLAFGLALG), 120–139 (ALALLFAVIGYIVYVGVYSL), 145–165 (SVYGTLVGSFSGAVPPVVGYC), 176–196 (AILLLMFSLWQMPHSYAIAIF), 220–240 (LHIVLYIAVFALVSALLPLAG), 242–262 (TGIAFMAVTCATSLWWLAMAL), and 277–297 (QVFGFSIITITALSVTMALDF).

This sequence belongs to the UbiA prenyltransferase family. Protoheme IX farnesyltransferase subfamily.

It localises to the cell inner membrane. The enzyme catalyses heme b + (2E,6E)-farnesyl diphosphate + H2O = Fe(II)-heme o + diphosphate. It participates in porphyrin-containing compound metabolism; heme O biosynthesis; heme O from protoheme: step 1/1. Converts heme B (protoheme IX) to heme O by substitution of the vinyl group on carbon 2 of heme B porphyrin ring with a hydroxyethyl farnesyl side group. The protein is Protoheme IX farnesyltransferase 2 of Shewanella baltica (strain OS185).